Reading from the N-terminus, the 311-residue chain is 4-hydroxy-3-methylbut-2-enyl diphosphate reductase (311 aa).

Cys12 provides a ligand contact to [4Fe-4S] cluster. (2E)-4-hydroxy-3-methylbut-2-enyl diphosphate-binding residues include His41 and His74. Dimethylallyl diphosphate contacts are provided by His41 and His74. Positions 41 and 74 each coordinate isopentenyl diphosphate. A [4Fe-4S] cluster-binding site is contributed by Cys96. Residue His124 participates in (2E)-4-hydroxy-3-methylbut-2-enyl diphosphate binding. Dimethylallyl diphosphate is bound at residue His124. His124 contacts isopentenyl diphosphate. The Proton donor role is filled by Glu126. (2E)-4-hydroxy-3-methylbut-2-enyl diphosphate is bound at residue Thr168. Cys198 is a [4Fe-4S] cluster binding site. Ser226, Ser227, Asn228, and Ser270 together coordinate (2E)-4-hydroxy-3-methylbut-2-enyl diphosphate. Positions 226, 227, 228, and 270 each coordinate dimethylallyl diphosphate. Ser226, Ser227, Asn228, and Ser270 together coordinate isopentenyl diphosphate.

This sequence belongs to the IspH family. [4Fe-4S] cluster serves as cofactor.

The catalysed reaction is isopentenyl diphosphate + 2 oxidized [2Fe-2S]-[ferredoxin] + H2O = (2E)-4-hydroxy-3-methylbut-2-enyl diphosphate + 2 reduced [2Fe-2S]-[ferredoxin] + 2 H(+). The enzyme catalyses dimethylallyl diphosphate + 2 oxidized [2Fe-2S]-[ferredoxin] + H2O = (2E)-4-hydroxy-3-methylbut-2-enyl diphosphate + 2 reduced [2Fe-2S]-[ferredoxin] + 2 H(+). Its pathway is isoprenoid biosynthesis; dimethylallyl diphosphate biosynthesis; dimethylallyl diphosphate from (2E)-4-hydroxy-3-methylbutenyl diphosphate: step 1/1. It functions in the pathway isoprenoid biosynthesis; isopentenyl diphosphate biosynthesis via DXP pathway; isopentenyl diphosphate from 1-deoxy-D-xylulose 5-phosphate: step 6/6. Catalyzes the conversion of 1-hydroxy-2-methyl-2-(E)-butenyl 4-diphosphate (HMBPP) into a mixture of isopentenyl diphosphate (IPP) and dimethylallyl diphosphate (DMAPP). Acts in the terminal step of the DOXP/MEP pathway for isoprenoid precursor biosynthesis. In Saccharophagus degradans (strain 2-40 / ATCC 43961 / DSM 17024), this protein is 4-hydroxy-3-methylbut-2-enyl diphosphate reductase.